A 45-amino-acid polypeptide reads, in one-letter code: Lysis protein for colicin E1 (45 aa).

The signal sequence occupies residues 1-17 (MRKRFFVGIFAINLLVG). Cys18 is lipidated: N-palmitoyl cysteine. Cys18 carries S-diacylglycerol cysteine lipidation.

It localises to the cell outer membrane. Functionally, lysis proteins are required for both colicin release and partial cell lysis. This chain is Lysis protein for colicin E1 (lys), found in Escherichia coli.